Reading from the N-terminus, the 446-residue chain is SWI/SNF chromatin-remodeling accessory subunit 1 (446 aa).

Positions 1-53 (MQTQARPPVPQGPRFNHPATPQQVRRPINAPLPGQTAQIQGNRGPQPPKKKKR) are disordered. An SWIB/MDM2 domain is found at 220 to 297 (YQPMKFKLHP…PQRLHQLLQQ (78 aa)).

It belongs to the SMARCD family. As to quaternary structure, component of the multiprotein chromatin-remodeling complexes SWI/SNF: SWI/SNF-A (BAF), SWI/SNF-B (PBAF) and related complexes. The canonical complex contains a catalytic subunit swsn-4, core subunits swsn-1 and swsn-5, and accessory subunits swsn-3, swsn-6, phf-10, dpff-1, swsn-9 and either ham-3/swsn-2.1 or swsn-2.2. May interact with blmp-1. In terms of tissue distribution, broadly expressed in all cell types.

The protein localises to the nucleus. In terms of biological role, involved in transcriptional activation and repression of select genes by chromatin remodeling (alteration of DNA-nucleosome topology). Component of SWI/SNF chromatin remodeling complexes that carry out key enzymatic activities, changing chromatin structure by altering DNA-histone contacts within a nucleosome in an ATP-dependent manner. Required for the blmp-1-mediated transcriptional activation or repression of several hypodermal genes such as bed-3. Involved in regulating differentiation, migration and axon pathfinding of specific serotonergic neurons (HSNs). Probably regulates vulva development through the let-60/Ras pathway. May be involved in regulation of developmental processes in the embryo driven by the Wnt pathway. Involved in gonadogenesis. The sequence is that of SWI/SNF chromatin-remodeling accessory subunit 1 from Caenorhabditis elegans.